Reading from the N-terminus, the 109-residue chain is uncharacterized protein (109 aa).

Transmembrane regions (helical) follow at residues 16–36, 54–74, and 80–100; these read YIPL…YYGL, TVYF…LLCL, and FCSS…TLAM.

It is found in the membrane. This is an uncharacterized protein from Schizosaccharomyces pombe (strain 972 / ATCC 24843) (Fission yeast).